Reading from the N-terminus, the 749-residue chain is Small G protein signaling modulator 3 (749 aa).

A Rab-GAP TBC domain is found at 114 to 305 (GIPHGMRPQL…RIWDLFFYEG (192 aa)). Ser-406 carries the post-translational modification Phosphoserine. Residues 415 to 439 (EDDLEALKAKNIKQTELVADLREAI) are a coiled coil. The SH3 domain occupies 480–539 (SHRRRAKALLDFERHDDDELGFRKNDIITIVSQKDEHCWVGELNGLRGWFPAKFVEVLDE). An RUN domain is found at 555-718 (GVTDLVRGTL…FAFSLSQDWE (164 aa)).

This sequence belongs to the small G protein signaling modulator family. In terms of assembly, interacts with GJA1. Interaction with GJA1 induces its degradation. Interacts via its RUN domain with the C-terminal region of NF2. Interacts with RAB3A, RAB4A, RAB5A, RAB8A, RAB11A, RAP1A, RAP1B, RAP2A, RAP2B and PDCD6IP. No interaction with RAB27A. Widely expressed.

It localises to the cytoplasm. Functionally, may play a cooperative role in NF2-mediated growth suppression of cells. The polypeptide is Small G protein signaling modulator 3 (Homo sapiens (Human)).